A 391-amino-acid polypeptide reads, in one-letter code: MGESGPVVIDPRRHDAVLFGVGDALGSALASQLGQIGVGTAAIAADDPAAAADRLRVRPGRCVVVAGDPAAVEAARAAGFALVIGLAPDGRDGDGLRAAGADAVIAELEQITVRTGDRRMSQLPDASQALTGGADGLAGRHPAVFFDFDGTLSDIVDDPDAARPVAGATAALTRLAARCPVAVLSGRDLADVTKRVGVPGIWYAGSHGFELTAPDGSHHQNDDAAAAIPVLAQAAGRLSDELGTIPGVVVEHKRFGVAVHYRNAARDRVGEVAAAVRAAGRHDALRVTTGREVIELRPDLDWDKGKTLHWVIEHLRRSGSGALTPVYLGDDITDEDAFDAVRGGPVQGVPILVRHNDDGDRATAALFALDSPARAAEFTERLADQLERGEG.

The active-site Nucleophile is Asp-147. Mg(2+) contacts are provided by Asp-147, Asp-149, and Asp-330. Position 147-149 (147-149) interacts with substrate; it reads DFD.

The protein belongs to the trehalose phosphatase family. Requires Mg(2+) as cofactor.

It carries out the reaction alpha,alpha-trehalose 6-phosphate + H2O = alpha,alpha-trehalose + phosphate. Its pathway is glycan biosynthesis; trehalose biosynthesis. In terms of biological role, removes the phosphate from trehalose 6-phosphate to produce free trehalose. The protein is Trehalose-phosphate phosphatase (otsB) of Mycobacterium avium (strain 104).